Consider the following 165-residue polypeptide: Growth arrest and DNA damage-inducible protein GADD45 alpha (165 aa).

Thr-2 is modified (phosphothreonine).

This sequence belongs to the GADD45 family. In terms of assembly, interacts with AURKA, PCNA, GADD45GIP1 and MAPK14.

The protein resides in the nucleus. Functionally, might affect PCNA interaction with some CDK (cell division protein kinase) complexes; stimulates DNA excision repair in vitro and inhibits entry of cells into S phase. In T-cells, functions as a regulator of p38 MAPKs by inhibiting p88 phosphorylation and activity. The protein is Growth arrest and DNA damage-inducible protein GADD45 alpha (GADD45A) of Cricetulus griseus (Chinese hamster).